Consider the following 173-residue polypeptide: Small ribosomal subunit protein uS7 (173 aa).

This sequence belongs to the universal ribosomal protein uS7 family. In terms of assembly, part of the 30S ribosomal subunit. Contacts proteins S9 and S11.

Its function is as follows. One of the primary rRNA binding proteins, it binds directly to 16S rRNA where it nucleates assembly of the head domain of the 30S subunit. Is located at the subunit interface close to the decoding center, probably blocks exit of the E-site tRNA. The chain is Small ribosomal subunit protein uS7 from Orientia tsutsugamushi (strain Ikeda) (Rickettsia tsutsugamushi).